The chain runs to 90 residues: Large ribosomal subunit protein bL27 (90 aa).

Positions 1–24 are disordered; it reads MAHKKGTGSTRNGRDSNSKRLGVK.

It belongs to the bacterial ribosomal protein bL27 family.

The polypeptide is Large ribosomal subunit protein bL27 (Prochlorococcus marinus (strain NATL1A)).